The sequence spans 405 residues: Tyrosine--tRNA ligase (405 aa).

The 'HIGH' region motif lies at 41 to 50; that stretch reads PTAPDLHLGH. A 'KMSKS' region motif is present at residues 225-229; sequence KMSKS. ATP is bound at residue Lys228. Residues 342–404 enclose the S4 RNA-binding domain; sequence EPLLVWVLSK…GKKGKFLKII (63 aa).

It belongs to the class-I aminoacyl-tRNA synthetase family. TyrS type 2 subfamily. In terms of assembly, homodimer.

Its subcellular location is the cytoplasm. It carries out the reaction tRNA(Tyr) + L-tyrosine + ATP = L-tyrosyl-tRNA(Tyr) + AMP + diphosphate + H(+). Functionally, catalyzes the attachment of tyrosine to tRNA(Tyr) in a two-step reaction: tyrosine is first activated by ATP to form Tyr-AMP and then transferred to the acceptor end of tRNA(Tyr). This is Tyrosine--tRNA ligase from Leptospira interrogans serogroup Icterohaemorrhagiae serovar Lai (strain 56601).